The following is a 362-amino-acid chain: Oxysterol-binding protein 5 (362 aa).

This sequence belongs to the OSBP family.

The polypeptide is Oxysterol-binding protein 5 (osbE) (Dictyostelium discoideum (Social amoeba)).